Consider the following 859-residue polypeptide: Transforming growth factor-beta receptor-associated protein 1 (859 aa).

Positions 24-297 (RGLLECVECC…HILQDFEGRV (274 aa)) constitute a CNH domain. A CHCR repeat occupies 563–727 (KRPLDEQQSG…LLAVYLGPGP (165 aa)).

Belongs to the TRAP1 family. In terms of assembly, interacts with TGFBR2 and ACVR2B; in the absence of ligand stimulation. Interacts with TGFBR1, ACVRL1, BMPR1A and ACVR1B; in the absence of ligand stimulation and to a less extent. Interacts with SMAD4; the interaction seems to be mutually exclusive with the interaction of SMAD4 and phosphorylated SMAD2. May interact with ALOX5. Interacts with RAB5C. Interacts with VPS8, VPS11 and VPS16. Component of the putative class C core vacuole/endosome tethering (CORVET) complex; the core of which composed of the class C Vps proteins VPS11, VPS16, VPS18 and VPS33A, is associated with VPS8 and TGFBRAP1.

The protein localises to the cytoplasm. It localises to the early endosome. Its function is as follows. Plays a role in the TGF-beta/activin signaling pathway. It associates with inactive heteromeric TGF-beta and activin receptor complexes, mainly through the type II receptor, and is released upon activation of signaling. May recruit SMAD4 to the vicinity of the receptor complex and facilitate its interaction with receptor-regulated Smads, such as SMAD2. In terms of biological role, plays a role in vesicle-mediated protein trafficking of the endocytic membrane transport pathway. Believed to act as a component of the putative CORVET endosomal tethering complexes which is proposed to be involved in the Rab5-to-Rab7 endosome conversion probably implicating MON1A/B, and via binding SNAREs and SNARE complexes to mediate tethering and docking events during SNARE-mediated membrane fusion. The CORVET complex is proposed to function as a Rab5 effector to mediate early endosome fusion probably in specific endosome subpopulations. Functions predominantly in APPL1-containing endosomes and in degradative but not recycling trafficking of endocytosed cargo. In Bos taurus (Bovine), this protein is Transforming growth factor-beta receptor-associated protein 1 (TGFBRAP1).